A 661-amino-acid polypeptide reads, in one-letter code: CD180 antigen (661 aa).

The first 23 residues, 1–23 (MAFDVSCFFWVVLFSAGCKVITS), serve as a signal peptide directing secretion. Residues 24–626 (WDQMCIEKEA…KLSDVKLSCG (603 aa)) are Extracellular-facing. The 21-residue stretch at 33-53 (ANKTYNCENLGLSEIPDTLPN) folds into the LRRNT domain. N-linked (GlcNAc...) asparagine glycans are attached at residues N34, N53, N70, and N78. LRR repeat units lie at residues 54–75 (TTEF…TFSR), 78–99 (NLTF…TFQS), 102–123 (QLST…SLNG), 126–147 (SLKH…PVHN), 150–171 (NLES…KDFP), 174–195 (NLKV…DMRS), and 201–221 (NLSL…AFDS). Residues N201, N234, and N244 are each glycosylated (N-linked (GlcNAc...) asparagine). 5 LRR repeats span residues 275–296 (SVES…TFQC), 299–320 (QLQE…MKGL), 322–343 (LLKK…SAAN), 346–366 (SLTH…VGCL), and 371–391 (NLQT…CSLQ). N-linked (GlcNAc...) asparagine glycans are attached at residues N394 and N402. 7 LRR repeats span residues 397–418 (HLQT…AFKE), 421–442 (QLEL…SPFQ), 446–466 (FLQV…HLLA), 470–493 (VLRH…NLLQ), 497–518 (SLEV…AFHS), 521–544 (KMSH…SHLK), and 546–564 (IYLN…RLLP). An N-linked (GlcNAc...) asparagine glycan is attached at N451. N573 carries N-linked (GlcNAc...) asparagine glycosylation. An LRRCT domain is found at 577–627 (NPLDCTCSNIHFLTWYKENLHKLEGSEETTCANPPSLRGVKLSDVKLSCGI). The chain crosses the membrane as a helical span at residues 627–650 (ITAIGIFFLIVFLLLLAILLFFAV). Over 651-661 (KYLLRWKYQHI) the chain is Cytoplasmic.

It belongs to the Toll-like receptor family. In terms of assembly, M-shaped tetramer of two CD180-LY86 heterodimers. As to expression, expressed mainly on mature peripherical B cells. Detected in spleen, lymph node and appendix. Not detected in pre-B and -T cells.

It is found in the cell membrane. In terms of biological role, may cooperate with MD-1 and TLR4 to mediate the innate immune response to bacterial lipopolysaccharide (LPS) in B-cells. Leads to NF-kappa-B activation. Also involved in the life/death decision of B-cells. This chain is CD180 antigen (CD180), found in Homo sapiens (Human).